The following is a 689-amino-acid chain: Glycine--tRNA ligase beta subunit (689 aa).

Belongs to the class-II aminoacyl-tRNA synthetase family. As to quaternary structure, tetramer of two alpha and two beta subunits.

Its subcellular location is the cytoplasm. It catalyses the reaction tRNA(Gly) + glycine + ATP = glycyl-tRNA(Gly) + AMP + diphosphate. The protein is Glycine--tRNA ligase beta subunit of Pseudoalteromonas translucida (strain TAC 125).